Consider the following 670-residue polypeptide: DNA ligase (670 aa).

NAD(+)-binding positions include 33–37 (DAEFD), 82–83 (SL), and Glu-113. Lys-115 functions as the N6-AMP-lysine intermediate in the catalytic mechanism. Residues Arg-136, Glu-170, Lys-285, and Lys-309 each contribute to the NAD(+) site. Zn(2+)-binding residues include Cys-403, Cys-406, Cys-421, and Cys-427. The region spanning 587 to 670 (EQNLYLSGKT…EVLKAGDNNG (84 aa)) is the BRCT domain.

This sequence belongs to the NAD-dependent DNA ligase family. LigA subfamily. Mg(2+) is required as a cofactor. Requires Mn(2+) as cofactor.

It carries out the reaction NAD(+) + (deoxyribonucleotide)n-3'-hydroxyl + 5'-phospho-(deoxyribonucleotide)m = (deoxyribonucleotide)n+m + AMP + beta-nicotinamide D-nucleotide.. Its function is as follows. DNA ligase that catalyzes the formation of phosphodiester linkages between 5'-phosphoryl and 3'-hydroxyl groups in double-stranded DNA using NAD as a coenzyme and as the energy source for the reaction. It is essential for DNA replication and repair of damaged DNA. The polypeptide is DNA ligase (Halothermothrix orenii (strain H 168 / OCM 544 / DSM 9562)).